The chain runs to 191 residues: Ciliary microtubule-associated protein 3 (191 aa).

In terms of assembly, interacts with proteins involved in ciliary transport, including ARL13B, CETN1, KIF3A, RAB6A, RAB8A, TUBB1 and TUBG1. Interacts with AURKA.

The protein localises to the cytoplasmic vesicle. It localises to the golgi apparatus. It is found in the trans-Golgi network. Its subcellular location is the cytoplasm. Its function is as follows. During primary cilia disassembly, involved in cilia disassembly. Required specifically to control cilia retraction as well as the liberation and duplication of the basal body/centrosome. May act by stimulating AURKA activity at the basal body in a cell cycle-dependent manner. The sequence is that of Ciliary microtubule-associated protein 3 from Homo sapiens (Human).